A 457-amino-acid polypeptide reads, in one-letter code: Probable mitochondrial-processing peptidase subunit beta (457 aa).

A Zn(2+)-binding site is contributed by His66. Glu69 (proton acceptor) is an active-site residue. 2 residues coordinate Zn(2+): His70 and Glu146.

The protein belongs to the peptidase M16 family. Heterodimer of mas2 (alpha) and qcr1 (beta) subunits, forming the mitochondrial processing protease (MPP) in which mas2 is involved in substrate recognition and binding and qcr1 is the catalytic subunit. It depends on Zn(2+) as a cofactor.

It is found in the mitochondrion matrix. The enzyme catalyses Release of N-terminal transit peptides from precursor proteins imported into the mitochondrion, typically with Arg in position P2.. Its activity is regulated as follows. Binding to mas2 is required for catalytic activity. Its function is as follows. Catalytic subunit of the essential mitochondrial processing protease (MPP), which cleaves the mitochondrial sequence off newly imported precursors proteins. Preferentially, cleaves after an arginine at position P2. This Schizosaccharomyces pombe (strain 972 / ATCC 24843) (Fission yeast) protein is Probable mitochondrial-processing peptidase subunit beta (qcr1).